The chain runs to 729 residues: Transient receptor potential cation channel subfamily V member 5 (729 aa).

At 1–327 (MGGFLPKAEG…SFKWNKYGRP (327 aa)) the chain is on the cytoplasmic side. ANK repeat units lie at residues 44–74 (ILESPLLRASKENDLSVLRQLLLDCTCDVRQ), 78–107 (LGETALHIAALYDNLEAALVLMEAAPELVF), 116–145 (AGQTALHIAVVNQNVNLVRALLTRRASVSA), 162–191 (FGEHPLSFAACVNSEEIVRLLIEHGADIRA), 195–228 (LGNTVLHILILQPNKTFACQMYNLLLSYDGHGDH), and 239–268 (QGLTPFKLAGVEGNTVMFQHLMQKRRHIQW). Residues 328 to 348 (YFCILAALYLLYMICFTTCCV) form a helical membrane-spanning segment. Over 349–385 (YRPLKFRGGNRTHSRDITILQQKLLQEAYETREDIIR) the chain is Extracellular. N-linked (GlcNAc...) asparagine glycosylation occurs at asparagine 358. The chain crosses the membrane as a helical span at residues 386–408 (LVGELVSIVGAVIILLLEIPDIF). Topologically, residues 409–419 (RVGASRYFGKT) are cytoplasmic. Residues 420–442 (ILGGPFHVIIITYASLVLVTMVM) form a helical membrane-spanning segment. Residues 443-448 (RLTNTN) lie on the Extracellular side of the membrane. The helical transmembrane segment at 449-469 (GEVVPMSFALVLGWCSVMYFT) threads the bilayer. Residues 470 to 492 (RGFQMLGPFTIMIQKMIFGDLMR) lie on the Cytoplasmic side of the membrane. The helical transmembrane segment at 493–513 (FCWLMAVVILGFASAFYIIFQ) threads the bilayer. Residues 524 to 544 (YDYPMALFTTFELFLTVIDAP) constitute an intramembrane region (pore-forming). Residue aspartate 542 coordinates Ca(2+). The chain crosses the membrane as a helical span at residues 557-577 (IVNFAFTIIATLLMLNLFIAM). The Cytoplasmic segment spans residues 578–729 (MGDTHWRVAQ…EGDGEEVYHF (152 aa)). Residues 598–602 (VATTV) form an interaction with S100A10 region. Positions 650-653 (VFKN) are involved in Ca(2+)-dependent inactivation. Residues 654–665 (SDKEDDQEHPSE) show a composition bias toward basic and acidic residues. The segment at 654-675 (SDKEDDQEHPSEKQPSGAESGT) is disordered. Threonine 685 bears the Phosphothreonine mark. Serine 689 bears the Phosphoserine mark. The interval 700–729 (GWEILRQNTLGHLNLGLNLSEGDGEEVYHF) is involved in Ca(2+)-dependent inactivation.

Belongs to the transient receptor (TC 1.A.4) family. TrpV subfamily. TRPV5 sub-subfamily. In terms of assembly, homotetramer and probably heterotetramer with TRPV6. Interacts with TRPV6. Interacts with S100A10 and probably with the ANAX2-S100A10 heterotetramer. The interaction with S100A10 is required for the trafficking to the plasma membrane. Interacts with calmodulin. Interacts with BSPRY, which results in its inactivation. In terms of processing, glycosylated. As to expression, expressed at high levels in kidney, small intestine and pancreas, and at lower levels in testis, prostate, placenta, brain, colon and rectum.

It is found in the apical cell membrane. The enzyme catalyses Ca(2+)(in) = Ca(2+)(out). With respect to regulation, activated by WNK3. Constitutively active calcium selective cation channel thought to be involved in Ca(2+) reabsorption in kidney and intestine. Required for normal Ca(2+) reabsorption in the kidney distal convoluted tubules. The channel is activated by low internal calcium level and the current exhibits an inward rectification. A Ca(2+)-dependent feedback regulation includes fast channel inactivation and slow current decay. Heteromeric assembly with TRPV6 seems to modify channel properties. TRPV5-TRPV6 heteromultimeric concatemers exhibit voltage-dependent gating. The sequence is that of Transient receptor potential cation channel subfamily V member 5 (TRPV5) from Homo sapiens (Human).